A 216-amino-acid chain; its full sequence is Cytidylate kinase (216 aa).

7–15 contributes to the ATP binding site; sequence GPAGTGKST.

It belongs to the cytidylate kinase family. Type 1 subfamily.

The protein resides in the cytoplasm. It catalyses the reaction CMP + ATP = CDP + ADP. The enzyme catalyses dCMP + ATP = dCDP + ADP. The protein is Cytidylate kinase of Chlamydia muridarum (strain MoPn / Nigg).